A 293-amino-acid chain; its full sequence is MLSSLIRDSFPLLILLPTFLAALGASVAGGVMGTYIVVKRIVSISGSISHAILGGIGLTLWIQYKLHLSFFPMYGAIVGAIFLALCIGKIHLKYQEREDSLIAMIWSVGMAIGIIFISRLPTFNGELINFLFGNILWVTPSDLYSLGIFDLLVLGIVVLCHTRFLALCFDERYTALNHCSVQLWYFLLLVLTAITIVMLIYVMGTILMLSMLVLPVAIACRFSYKMTRIMFISVLLNILCSFSGICIAYCLDFPVGPTISLLMGLGYTASLCVKKRYNPSTPSPVSPEINTNV.

Helical transmembrane passes span 12 to 32 (LLIL…GGVM), 41 to 61 (IVSI…LTLW), 68 to 88 (LSFF…LCIG), 101 to 121 (LIAM…SRLP), 140 to 160 (PSDL…VVLC), 183 to 203 (LWYF…IYVM), and 253 to 273 (FPVG…SLCV).

This sequence belongs to the ABC-3 integral membrane protein family.

Its subcellular location is the cell inner membrane. Functionally, part of an ATP-driven transport system CPn_0541/CPn_0542/CPn_0543 for a metal. The chain is Probable metal transport system membrane protein CPn_0543/CP_0209/CPj0543/CpB0565 from Chlamydia pneumoniae (Chlamydophila pneumoniae).